The primary structure comprises 162 residues: Interleukin-15 (162 aa).

An N-terminal signal peptide occupies residues 1–29; sequence MKILKPYMRNTSISCYLCFLLNSHFLTEA. A propeptide spanning residues 30-48 is cleaved from the precursor; it reads GIHVFILGCVSVGLPKTEA. 2 cysteine pairs are disulfide-bonded: C83-C133 and C90-C136. N-linked (GlcNAc...) asparagine glycosylation is found at N104, N108, and N119.

It belongs to the IL-15/IL-21 family.

It is found in the secreted. Functionally, cytokine that plays a major role in the development of inflammatory and protective immune responses to microbial invaders and parasites by modulating immune cells of both the innate and adaptive immune systems. Stimulates the proliferation and activation of natural killer cells, T-cells and B-cells and promotes the secretion of several cytokines. In monocytes, induces the production of IL8 and monocyte chemotactic protein 1/CCL2, two chemokines that attract neutrophils and monocytes respectively to sites of infection. Unlike most cytokines, which are secreted in soluble form, IL15 is expressed in association with its high affinity IL15RA on the surface of IL15-producing cells and delivers signals to target cells that express IL2RB and IL2RG receptor subunits. Binding to its receptor triggers the phosphorylation of JAK1 and JAK3 and the recruitment and subsequent phosphorylation of signal transducer and activator of transcription-3/STAT3 and STAT5. In mast cells, induces the rapid tyrosine phosphorylation of STAT6 and thereby controls mast cell survival and release of cytokines such as IL4. The chain is Interleukin-15 (Il15) from Mus musculus (Mouse).